The sequence spans 296 residues: 33 kDa chaperonin (296 aa).

2 disulfides stabilise this stretch: Cys233-Cys235 and Cys267-Cys270.

It belongs to the HSP33 family. Under oxidizing conditions two disulfide bonds are formed involving the reactive cysteines. Under reducing conditions zinc is bound to the reactive cysteines and the protein is inactive.

The protein localises to the cytoplasm. In terms of biological role, redox regulated molecular chaperone. Protects both thermally unfolding and oxidatively damaged proteins from irreversible aggregation. Plays an important role in the bacterial defense system toward oxidative stress. In Actinobacillus pleuropneumoniae serotype 7 (strain AP76), this protein is 33 kDa chaperonin.